Consider the following 98-residue polypeptide: NADH-ubiquinone oxidoreductase chain 4L (98 aa).

3 consecutive transmembrane segments (helical) span residues 1-21, 29-49, and 61-81; these read MSLVHMNIGLAFTVAFLGLLM, SLLCLEGMMLTLFIMSSIMVL, and IILLVFAACEAAVGLSLLVMV.

The protein belongs to the complex I subunit 4L family. In terms of assembly, core subunit of respiratory chain NADH dehydrogenase (Complex I) which is composed of 45 different subunits.

It is found in the mitochondrion inner membrane. The enzyme catalyses a ubiquinone + NADH + 5 H(+)(in) = a ubiquinol + NAD(+) + 4 H(+)(out). Functionally, core subunit of the mitochondrial membrane respiratory chain NADH dehydrogenase (Complex I) which catalyzes electron transfer from NADH through the respiratory chain, using ubiquinone as an electron acceptor. Part of the enzyme membrane arm which is embedded in the lipid bilayer and involved in proton translocation. This Pseudosoriculus fumidus (Taiwanese brown-toothed shrew) protein is NADH-ubiquinone oxidoreductase chain 4L (MT-ND4L).